Consider the following 499-residue polypeptide: MTSLDFSTILPEVVLAGYALAALMAGAYLGKDRLARTLLWVTVAAFLVVAAMVGLGNHVDGAAFHGMFIDDGFSRFAKVVTLVAAAGVLAMSADYMQRRNMLRFEFPIIVALAVLGMMFMVSAGDLLTLYMGLELQSLALYVVAAMRRDSVRSSEAGLKYFVLGSLSSGLLLYGASLVYGFAGTTGFEGIISTIEAGHLSLGVLFGLVFMLVGLSFKVSAVPFHMWTPDVYEGSPTPVTAFFATAPKVAAMALIARLVFDAFGHVIGDWSQIVAALAVMSMFLGSIAGIGQTNIKRLMAYSSIAHMGFALVGLAAGTAIGVQNMLLYMTIYAVMNIGTFAFILSMERDGVPVTDLAALNRFAWTDPVKALAMLVLMFSLAGVPPTLGFFAKFGVLTAAVDAGMGWLAVLGVIASVIGAFYYLRIVYYMYFGGESEGMTSRMGAVQYLALMVPALAMLVGAISMFGVDSAAGRAAETLVGPVAAIEQPAEAAQAEPVQGE.

The next 14 helical transmembrane spans lie at 9 to 29 (ILPEVVLAGYALAALMAGAYL), 37 to 57 (TLLWVTVAAFLVVAAMVGLGN), 76 to 96 (FAKVVTLVAAAGVLAMSADYM), 104 to 124 (FEFPIIVALAVLGMMFMVSAG), 126 to 146 (LLTLYMGLELQSLALYVVAAM), 161 to 181 (FVLGSLSSGLLLYGASLVYGF), 196 to 216 (AGHLSLGVLFGLVFMLVGLSF), 235 to 255 (PTPVTAFFATAPKVAAMALIA), 269 to 289 (WSQIVAALAVMSMFLGSIAGI), 301 to 321 (SSIAHMGFALVGLAAGTAIGV), 324 to 344 (MLLYMTIYAVMNIGTFAFILS), 369 to 389 (ALAMLVLMFSLAGVPPTLGFF), 402 to 422 (GMGWLAVLGVIASVIGAFYYL), and 446 to 466 (YLALMVPALAMLVGAISMFGV).

Belongs to the complex I subunit 2 family. NDH-1 is composed of at least 14 different subunits, Nqo1 to Nqo14. The complex has a L-shaped structure, with the hydrophobic arm (subunits Nqo7, Nqo8, Nqo10 to Nqo14) embedded in the inner membrane and the hydrophilic peripheral arm (subunits Nqo1 to Nqo6, Nqo9) protruding into the bacterial cytoplasm. The hydrophilic domain contains all the redox centers.

The protein localises to the cell inner membrane. The catalysed reaction is a quinone + NADH + 5 H(+)(in) = a quinol + NAD(+) + 4 H(+)(out). NDH-1 shuttles electrons from NADH, via FMN and iron-sulfur (Fe-S) centers, to quinones in the respiratory chain. The immediate electron acceptor for the enzyme in this species is believed to be ubiquinone. Couples the redox reaction to proton translocation (for every two electrons transferred, four hydrogen ions are translocated across the cytoplasmic membrane), and thus conserves the redox energy in a proton gradient. The chain is NADH-quinone oxidoreductase subunit 14 from Paracoccus denitrificans.